Consider the following 207-residue polypeptide: Sodium/potassium-transporting ATPase subunit beta-1-interacting protein 1 (207 aa).

Helical transmembrane passes span 2 to 22 (GRCD…VAAL), 35 to 55 (APIL…FGTV), and 62 to 82 (LILY…IICF). Residue N100 is glycosylated (N-linked (GlcNAc...) asparagine). A helical membrane pass occupies residues 147-167 (VVSSALQVFLALFGFVYACYV).

This sequence belongs to the NKAIN family. As to quaternary structure, interacts with atp1b1 C-terminus.

Its subcellular location is the cell membrane. In Danio rerio (Zebrafish), this protein is Sodium/potassium-transporting ATPase subunit beta-1-interacting protein 1 (nkain1).